A 340-amino-acid chain; its full sequence is Phospho-N-acetylmuramoyl-pentapeptide-transferase (340 aa).

9 consecutive transmembrane segments (helical) span residues 22–42, 69–89, 95–115, 129–149, 156–176, 186–206, 209–229, 235–257, and 316–336; these read VVVPFGLSALGSALLGSLLIP, TMGGISFLPVGLLVAGIWSGW, AVALLTLAYSFVGWLDDWLVI, LLLQVGVALGFCVYLAWQGIP, GIGTLSLGWLFWPLALFVLVG, GMDGLAAGVVAILLIGLGLLH, PELSVLAFTLSGACLGFLVHN, LFMGDTGSLGLGGALAGLALLGD, and VVGSFYGVTALLVGLGWAWWH.

Belongs to the glycosyltransferase 4 family. MraY subfamily. Mg(2+) serves as cofactor.

It is found in the cell inner membrane. The catalysed reaction is UDP-N-acetyl-alpha-D-muramoyl-L-alanyl-gamma-D-glutamyl-meso-2,6-diaminopimeloyl-D-alanyl-D-alanine + di-trans,octa-cis-undecaprenyl phosphate = di-trans,octa-cis-undecaprenyl diphospho-N-acetyl-alpha-D-muramoyl-L-alanyl-D-glutamyl-meso-2,6-diaminopimeloyl-D-alanyl-D-alanine + UMP. The protein operates within cell wall biogenesis; peptidoglycan biosynthesis. Its function is as follows. Catalyzes the initial step of the lipid cycle reactions in the biosynthesis of the cell wall peptidoglycan: transfers peptidoglycan precursor phospho-MurNAc-pentapeptide from UDP-MurNAc-pentapeptide onto the lipid carrier undecaprenyl phosphate, yielding undecaprenyl-pyrophosphoryl-MurNAc-pentapeptide, known as lipid I. The chain is Phospho-N-acetylmuramoyl-pentapeptide-transferase from Synechococcus sp. (strain JA-2-3B'a(2-13)) (Cyanobacteria bacterium Yellowstone B-Prime).